We begin with the raw amino-acid sequence, 1286 residues long: CLIP-associating protein 2 (1286 aa).

The golgi localization stretch occupies residues 1-40 (MRRLICKRICDYKSFDDEESVDGNRPSSAASAFKVPAPKT). 2 positions are modified to phosphoserine: Ser-14 and Ser-20. Residues 17-70 (DEESVDGNRPSSAASAFKVPAPKTPGNPVNSARKPGSAGGPKAGGTSKEGGAGA) form a disordered region. Gly residues predominate over residues 53 to 69 (SAGGPKAGGTSKEGGAG). The interval 66 to 317 (GGAGAVDEDD…KSLQTYLKSS (252 aa)) is TOG 1. HEAT repeat units lie at residues 179 to 214 (HGAEAIVPTLFNLVPNSAKVMATSGCAAIRFIIRHT), 215 to 251 (HVPRLIPLITSNCTSKSVPVRRRSFEFLDLLLQEWQT), and 256 to 293 (RHAAVLVETIKKGIHDADAEARVEARKTYMGLRNHFPG). 2 disordered regions span residues 320–350 (VASLPQSDRSSSSSQESLNRPFSSKWSTANP) and 355–374 (GRVSVGGSKASPLPGSLQRS). A phosphoserine mark is found at Ser-322, Ser-333, and Ser-336. Over residues 322–340 (SLPQSDRSSSSSQESLNRP) the composition is skewed to low complexity. Residues 341-350 (FSSKWSTANP) are compositionally biased toward polar residues. A phosphoserine mark is found at Ser-374, Ser-376, and Ser-413. A disordered region spans residues 410 to 473 (SYASLEDTSD…GSRSGSPGRV (64 aa)). Over residues 417 to 431 (TSDKMDGTASEDGRV) the composition is skewed to basic and acidic residues. The tract at residues 450-565 (RGRSRTKMVS…GPGYGMSQSS (116 aa)) is interaction with microtubules, MAPRE1 and MAPRE3. Over residues 459–473 (SQSQPGSRSGSPGRV) the composition is skewed to low complexity. A phosphoserine mark is found at Ser-461, Ser-465, Ser-469, Ser-484, and Ser-495. Positions 492–566 (NSASAQKRSK…PGYGMSQSSR (75 aa)) are disordered. The SXIP motif 1; mediates interaction with MAPRE1 and targeting to microtubule plus ends signature appears at 500-503 (SKIP). Position 513 is a phosphoserine (Ser-513). The SXIP motif 2; mediates interaction with MAPRE1 and targeting to microtubule plus ends motif lies at 523-526 (SRIP). Phosphoserine is present on residues Ser-531, Ser-535, Ser-570, Ser-572, Ser-581, Ser-614, and Ser-620. Residues 606–616 (RYESYGMHSDD) show a composition bias toward basic and acidic residues. Positions 606 to 638 (RYESYGMHSDDDANSDASSACSERSYSSRNGSI) are disordered. Positions 620–634 (SDASSACSERSYSSR) are enriched in low complexity. The tract at residues 642-873 (MRQTEDVAEV…TKLLHNHLRN (232 aa)) is TOG 2. HEAT repeat units follow at residues 702-739 (KVFSMFLETLVDFIQVHKDDLQDWLFVLLTQLLKKMGA) and 764-801 (LQFNILMRFTVDQTQTPSLKVKVAILKYIETLAKQMDP). The residue at position 779 (Thr-779) is a Phosphothreonine. The interval 864 to 1286 (TKLLHNHLRN…DPTTDVSGQS (423 aa)) is interaction with RSN and localization to the Golgi and kinetochores. Disordered stretches follow at residues 870-920 (HLRN…FDYD) and 944-990 (SFRS…QPAL). Polar residues-rich tracts occupy residues 872–884 (RNTGNGTQSSMGS) and 893–914 (SPANWSSPLTSPTNTSQNTLSP). Ser-884 is subject to Phosphoserine. Ser-944, Ser-947, Ser-1005, and Ser-1021 each carry phosphoserine. A compositionally biased stretch (basic and acidic residues) spans 947–964 (SQEDMSEPLKRDPKKEDG). The segment at 1009-1286 (RDYNPYNYSD…DPTTDVSGQS (278 aa)) is required for cortical localization. HEAT repeat units follow at residues 1046-1083 (LDHSDLVAELLKELSNHNERIEERKIALYELMKLTQEE), 1090-1127 (EHFKTILLLLLETLGDKEPTIRALALKVLKEILRHQPA), and 1208-1245 (LLLPEIMPGLIQGYDNSESSVRKACVFCLVAVHAVIGD).

The protein belongs to the CLASP family. In terms of assembly, interacts with microtubules. Interacts with MAPRE1; probably required for targeting to the growing microtubule plus ends. Interacts with CLIP2, ERC1, MAPRE3, PHLDB2 and RSN. The interaction with ERC1 may be mediated by PHLDB2. Interacts with GCC2; recruits CLASP2 to Golgi membranes. Interacts with MACF1. Interacts with SOGA1 and MTCL1. Phosphorylated by GSK3B. Phosphorylation by GSK3B may negatively regulate binding to microtubule lattices in lamella.

The protein resides in the cytoplasm. The protein localises to the cytoskeleton. Its subcellular location is the microtubule organizing center. It is found in the centrosome. It localises to the chromosome. The protein resides in the centromere. The protein localises to the kinetochore. Its subcellular location is the spindle. It is found in the golgi apparatus. It localises to the trans-Golgi network. The protein resides in the cell membrane. The protein localises to the cell projection. Its subcellular location is the ruffle membrane. It is found in the cell cortex. Its function is as follows. Microtubule plus-end tracking protein that promotes the stabilization of dynamic microtubules. Involved in the nucleation of noncentrosomal microtubules originating from the trans-Golgi network (TGN). Required for the polarization of the cytoplasmic microtubule arrays in migrating cells towards the leading edge of the cell. May act at the cell cortex to enhance the frequency of rescue of depolymerizing microtubules by attaching their plus-ends to cortical platforms composed of ERC1 and PHLDB2. This cortical microtubule stabilizing activity is regulated at least in part by phosphatidylinositol 3-kinase signaling. Also performs a similar stabilizing function at the kinetochore which is essential for the bipolar alignment of chromosomes on the mitotic spindle. Acts as a mediator of ERBB2-dependent stabilization of microtubules at the cell cortex. This chain is CLIP-associating protein 2 (Clasp2), found in Rattus norvegicus (Rat).